The following is a 604-amino-acid chain: Protein hemingway (604 aa).

4 disordered regions span residues 1 to 70 (MSGA…GNPH), 103 to 309 (NQLS…PTSQ), 359 to 387 (SDRR…GGGI), and 544 to 585 (TIKA…IDLD). Acidic residues-rich tracts occupy residues 8 to 38 (SDEE…YIEP), 135 to 183 (EDEA…DDAQ), 194 to 214 (DDSD…EDEP), and 288 to 300 (EEPE…EENQ). The segment covering 368 to 379 (EMSSMTETTMTS) has biased composition (low complexity).

The protein belongs to the CFAP97 family. As to expression, detected in ciliated sensory neurons at all stages of development, and in adult testis.

It is found in the cell projection. The protein localises to the cilium. It localises to the perikaryon. The protein resides in the cytoplasm. Involved in assembly and/or maintenance of motile cilia. Required during spermatogenesis for axoneme elongation. Necessary for optimal function of the chordotonal (hearing) organs. This Drosophila melanogaster (Fruit fly) protein is Protein hemingway.